The primary structure comprises 404 residues: Cysteine desulfurase IscS (404 aa).

Pyridoxal 5'-phosphate-binding positions include 75 to 76 (AT), Asn-155, Gln-183, and 203 to 205 (SGH). Residue Lys-206 is modified to N6-(pyridoxal phosphate)lysine. Thr-243 contributes to the pyridoxal 5'-phosphate binding site. Cys-328 serves as the catalytic Cysteine persulfide intermediate. Cys-328 contributes to the [2Fe-2S] cluster binding site.

This sequence belongs to the class-V pyridoxal-phosphate-dependent aminotransferase family. NifS/IscS subfamily. Homodimer. Forms a heterotetramer with IscU, interacts with other sulfur acceptors. Pyridoxal 5'-phosphate is required as a cofactor.

It is found in the cytoplasm. It catalyses the reaction (sulfur carrier)-H + L-cysteine = (sulfur carrier)-SH + L-alanine. It participates in cofactor biosynthesis; iron-sulfur cluster biosynthesis. Master enzyme that delivers sulfur to a number of partners involved in Fe-S cluster assembly, tRNA modification or cofactor biosynthesis. Catalyzes the removal of elemental sulfur atoms from cysteine to produce alanine. Functions as a sulfur delivery protein for Fe-S cluster synthesis onto IscU, an Fe-S scaffold assembly protein, as well as other S acceptor proteins. The chain is Cysteine desulfurase IscS from Actinobacillus succinogenes (strain ATCC 55618 / DSM 22257 / CCUG 43843 / 130Z).